Reading from the N-terminus, the 459-residue chain is Protein king tubby (459 aa).

Residues 114–205 form a disordered region; the sequence is HELEDEESSP…SNGAGGESEG (92 aa). Residues 123–155 are compositionally biased toward polar residues; that stretch reads PVTVIEQQQTAPHSANSTHSQRPSTTRQPSFND. A Phosphoserine modification is found at serine 152.

The protein belongs to the TUB family.

The protein localises to the cytoplasm. It is found in the nucleus. The protein resides in the cell projection. It localises to the cilium membrane. Its subcellular location is the rhabdomere. The protein is Protein king tubby of Drosophila persimilis (Fruit fly).